The chain runs to 652 residues: Acetyl-coenzyme A synthetase (652 aa).

Residues 191–194 (RAGR), threonine 311, and asparagine 335 contribute to the CoA site. ATP is bound by residues 387-389 (GEP), 411-416 (DTWWQT), aspartate 500, and arginine 515. Serine 523 provides a ligand contact to CoA. Arginine 526 is a binding site for ATP. Valine 537, histidine 539, and isoleucine 542 together coordinate Mg(2+). Residue arginine 584 participates in CoA binding. Lysine 609 is subject to N6-acetyllysine.

Belongs to the ATP-dependent AMP-binding enzyme family. Mg(2+) serves as cofactor. Post-translationally, acetylated. Deacetylation by the SIR2-homolog deacetylase activates the enzyme.

The enzyme catalyses acetate + ATP + CoA = acetyl-CoA + AMP + diphosphate. In terms of biological role, catalyzes the conversion of acetate into acetyl-CoA (AcCoA), an essential intermediate at the junction of anabolic and catabolic pathways. Acs undergoes a two-step reaction. In the first half reaction, Acs combines acetate with ATP to form acetyl-adenylate (AcAMP) intermediate. In the second half reaction, it can then transfer the acetyl group from AcAMP to the sulfhydryl group of CoA, forming the product AcCoA. Enables the cell to use acetate during aerobic growth to generate energy via the TCA cycle, and biosynthetic compounds via the glyoxylate shunt. Acetylates CheY, the response regulator involved in flagellar movement and chemotaxis. In Escherichia coli O6:H1 (strain CFT073 / ATCC 700928 / UPEC), this protein is Acetyl-coenzyme A synthetase.